Consider the following 316-residue polypeptide: 4-hydroxy-3-methylbut-2-enyl diphosphate reductase (316 aa).

C12 contacts [4Fe-4S] cluster. 2 residues coordinate (2E)-4-hydroxy-3-methylbut-2-enyl diphosphate: H41 and H74. Dimethylallyl diphosphate contacts are provided by H41 and H74. Residues H41 and H74 each coordinate isopentenyl diphosphate. A [4Fe-4S] cluster-binding site is contributed by C96. H124 lines the (2E)-4-hydroxy-3-methylbut-2-enyl diphosphate pocket. Position 124 (H124) interacts with dimethylallyl diphosphate. Residue H124 coordinates isopentenyl diphosphate. E126 serves as the catalytic Proton donor. Residue T169 participates in (2E)-4-hydroxy-3-methylbut-2-enyl diphosphate binding. C199 provides a ligand contact to [4Fe-4S] cluster. Positions 227, 228, 229, and 271 each coordinate (2E)-4-hydroxy-3-methylbut-2-enyl diphosphate. Dimethylallyl diphosphate contacts are provided by S227, S228, N229, and S271. Residues S227, S228, N229, and S271 each contribute to the isopentenyl diphosphate site.

Belongs to the IspH family. The cofactor is [4Fe-4S] cluster.

The enzyme catalyses isopentenyl diphosphate + 2 oxidized [2Fe-2S]-[ferredoxin] + H2O = (2E)-4-hydroxy-3-methylbut-2-enyl diphosphate + 2 reduced [2Fe-2S]-[ferredoxin] + 2 H(+). The catalysed reaction is dimethylallyl diphosphate + 2 oxidized [2Fe-2S]-[ferredoxin] + H2O = (2E)-4-hydroxy-3-methylbut-2-enyl diphosphate + 2 reduced [2Fe-2S]-[ferredoxin] + 2 H(+). It participates in isoprenoid biosynthesis; dimethylallyl diphosphate biosynthesis; dimethylallyl diphosphate from (2E)-4-hydroxy-3-methylbutenyl diphosphate: step 1/1. The protein operates within isoprenoid biosynthesis; isopentenyl diphosphate biosynthesis via DXP pathway; isopentenyl diphosphate from 1-deoxy-D-xylulose 5-phosphate: step 6/6. Functionally, catalyzes the conversion of 1-hydroxy-2-methyl-2-(E)-butenyl 4-diphosphate (HMBPP) into a mixture of isopentenyl diphosphate (IPP) and dimethylallyl diphosphate (DMAPP). Acts in the terminal step of the DOXP/MEP pathway for isoprenoid precursor biosynthesis. This is 4-hydroxy-3-methylbut-2-enyl diphosphate reductase from Stenotrophomonas maltophilia (strain K279a).